The primary structure comprises 1053 residues: Prestalk protein (1053 aa).

The N-terminal stretch at 1 to 18 is a signal peptide; it reads MNKIYLILILFTFVGIIL. The stretch at 38-60 is one X-1 repeat; the sequence is NKCTLDKCNNGCCSNTPININDN. Residues 38-1019 form a 41 X 24 AA tandem repeats, Cys-rich region; that stretch reads NKCTLDKCNN…VHTPVDCNDN (982 aa). The stretch at 61-84 is one X-2 repeat; it reads DECTVDTCNPKTGISHTPVNCDDG. An X-3 repeat occupies 85-108; sequence NSCTADSCLCGKGCQHVPIACDDN. The A-1 repeat unit spans residues 109–132; it reads NACTVDSCSNSTGCCHTPLSCDDN. The A-2 repeat unit spans residues 133–156; that stretch reads NPCTVDSCSNSTGCCHTPINVDDH. The B-1 repeat unit spans residues 157–180; it reads NACTEDKCTQSGGVTHTPIACDDK. The A-3 repeat unit spans residues 181 to 204; the sequence is NACTVDSCSNSTGCCHTPLSCDDN. Residues 205-228 form an A-4 repeat; it reads NACTVDSCSNSTGCVHTPINVDDH. A B-2 repeat occupies 229–252; the sequence is NACTEDKCTQSGGVTHTPIACDDK. The A-5 repeat unit spans residues 253–276; the sequence is NACTADSCSNSTGCCHTPITCDDN. The A-6 repeat unit spans residues 277–300; sequence NACTVDSCSNSTGCCHTPINVDDN. The stretch at 301–324 is one B-3 repeat; sequence NACTEDKCTQSGGVTHTPIACDDK. An A-7 repeat occupies 325-348; it reads NACTVDSCSNSTGCVHTPLACDDK. An A-8 repeat occupies 349–372; sequence NPCTVDSCSNSTGCCHTPINVDDN. A B-4 repeat occupies 373-396; the sequence is NACTEDKCTQSGGVTHTPINCDDN. The A-9 repeat unit spans residues 397–420; sequence NKCTVDSCSNSTGCCHTPMSCDDN. Residues 421 to 444 form an A-10 repeat; sequence NPCTVDSCSNSTGCVHTPINVDDN. One copy of the B-5 repeat lies at 445 to 468; the sequence is NACTEDKCTQNGGVTHTPIACDDK. The A-11 repeat unit spans residues 469–492; sequence NACTVDSCSNSTGCCHTPLKCDDN. Residues 493 to 516 form an A-12 repeat; sequence NACTVDSCSNSTGCVHTPINVDDN. The stretch at 517–540 is one B-6 repeat; the sequence is NACTEDKCTQSGGVTHTPISCDDK. The stretch at 541–564 is one A-13 repeat; sequence NPCTIDSCSNSTGCVHTPMSCDDR. The stretch at 565-588 is one X-4 repeat; it reads NPCTSDFCSWEKGCQHVALSCNDF. The A-14 repeat unit spans residues 589–612; it reads NACTMDSCSNSTGCTHTPIACDDK. An A-15 repeat occupies 613–636; that stretch reads NACTVDSCSNSTGCVHTPLTCDDN. One copy of the A-16 repeat lies at 637–660; sequence NPCTVDSCSNSTGCCHTPINVDDH. The B-7 repeat unit spans residues 661 to 684; the sequence is NACTEDKCTQSGGVTHTPIACDDK. An A-17 repeat occupies 685-708; that stretch reads NACTVDSCSNSTGCCHTPLSCDDN. An A-18 repeat occupies 709–732; the sequence is NACTVDSCSNSTGCVHTPINVDDN. A B-8 repeat occupies 733 to 756; that stretch reads NACTEDKCTQNGGVTHTPIACDDK. One copy of the A-19 repeat lies at 757-780; that stretch reads NACTVDSCSNSTGCCHTPLKCDDN. One copy of the A-20 repeat lies at 781-804; that stretch reads NPCTVDSCSNSTGCVHTPMNVDDN. The B-9 repeat unit spans residues 805 to 828; it reads NACTEDKCTQNGGVTHTPIRCDDL. The stretch at 829-852 is one A-21 repeat; it reads NSCTADSCSNSTGCVHTPINCDDN. The A-22 repeat unit spans residues 853-876; that stretch reads NKCTADSCSNSTGCCHTPISCDDN. An A-23 repeat occupies 877-900; it reads NPCTVDSCSNSTGCCHTPINVDDN. The B-10 repeat unit spans residues 901–924; it reads NPCTEDKCTQSGGVTHTPIGCNDN. The stretch at 925–948 is one A-24 repeat; sequence NACTVDSCSNSTGCTHTPMKCDDN. One copy of the A-25 repeat lies at 949-971; it reads NPCTIDSCSNSTGCVHTPMNCDD. The A-26 repeat unit spans residues 972-995; the sequence is GNFCTLDSCCSTGCTHTPIIIDDN. Residues 996-1019 form an A-27 repeat; the sequence is NPCTVDSCCNSTGVVHTPVDCNDN.

The protein localises to the secreted. It is found in the extracellular space. Its subcellular location is the extracellular matrix. Functionally, component of the stalk tube, the matrix that encases stalk cells. This chain is Prestalk protein (ecmB), found in Dictyostelium discoideum (Social amoeba).